The primary structure comprises 649 residues: Probable cyclic nucleotide-gated ion channel 12 (649 aa).

Residues 1-43 (MNHRRSKFARIDSMGVDGKLKSVRGRLKKVYGKMKTLENWRKT) lie on the Cytoplasmic side of the membrane. The helical transmembrane segment at 44 to 64 (VLLACVVALAIDPLFLFIPLI) threads the bilayer. Over 65–76 (DSQRFCFTFDKT) the chain is Extracellular. A helical transmembrane segment spans residues 77–97 (LVAVVCVIRTFIDTFYVIHII). At 98–128 (YYLITETIAPRSQASLRGEIVVHSKATLKTR) the chain is on the cytoplasmic side. A helical membrane pass occupies residues 129-149 (LLFHFIVDIISVLPIPQVVVL). The Extracellular portion of the chain corresponds to 150-162 (TLIPLSASLVSER). Residues 163–183 (ILKWIILSQYVPRIIRMYPLY) form a helical membrane-spanning segment. At 184–200 (KEVTRAFGTVAESKWAG) the chain is on the cytoplasmic side. A helical membrane pass occupies residues 201-221 (AALNLFLYMLHSYVFGAFWYL). The Extracellular portion of the chain corresponds to 222 to 329 (SSIERKSKCW…QNLETSNSAG (108 aa)). The helical transmembrane segment at 330–350 (EIFFAIIICVSGLLLFAVLIG) threads the bilayer. Over 351 to 649 (NVQKYLQSST…ADLEFAKAEA (299 aa)) the chain is Cytoplasmic. Residues 436-559 (LNIM…TFRL) and E507 contribute to the a nucleoside 3',5'-cyclic phosphate site. The segment at 545 to 560 (LNVFQRQKLQRTFRLY) is calmodulin-binding. In terms of domain architecture, IQ spans 565-594 (RSWAAFFIQAAWRKHCKRKLSKTRDNENIP). The segment at 618 to 649 (RRKDTADCSSSPDMSPPVPHKPADLEFAKAEA) is disordered. The span at 638–649 (KPADLEFAKAEA) shows a compositional bias: basic and acidic residues.

This sequence belongs to the cyclic nucleotide-gated cation channel (TC 1.A.1.5) family. As to quaternary structure, homotetramer or heterotetramer.

Its subcellular location is the cell membrane. Its function is as follows. Probable cyclic nucleotide-gated ion channel. The sequence is that of Probable cyclic nucleotide-gated ion channel 12 (CNGC12) from Arabidopsis thaliana (Mouse-ear cress).